The following is a 293-amino-acid chain: NAD-dependent protein deacetylase (293 aa).

One can recognise a Deacetylase sirtuin-type domain in the interval M1 to T284. NAD(+)-binding positions include G27–K47 and Q105–D108. Residue H123 is the Proton acceptor of the active site. Zn(2+) contacts are provided by C131, C134, C182, and C185. NAD(+) contacts are provided by residues G222–S224, N248–G250, and C266.

The protein belongs to the sirtuin family. Class II subfamily. The cofactor is Zn(2+).

It is found in the cytoplasm. It catalyses the reaction N(6)-acetyl-L-lysyl-[protein] + NAD(+) + H2O = 2''-O-acetyl-ADP-D-ribose + nicotinamide + L-lysyl-[protein]. NAD-dependent protein deacetylase which modulates the activities of several enzymes which are inactive in their acetylated form. The sequence is that of NAD-dependent protein deacetylase from Xanthomonas campestris pv. campestris (strain B100).